Here is a 256-residue protein sequence, read N- to C-terminus: 5-keto-4-deoxy-D-glucarate aldolase (256 aa).

The Proton acceptor role is filled by histidine 50. Residue glutamine 151 coordinates substrate. A Mg(2+)-binding site is contributed by glutamate 153. Positions 178 and 179 each coordinate substrate. Position 179 (aspartate 179) interacts with Mg(2+).

This sequence belongs to the HpcH/HpaI aldolase family. KDGluc aldolase subfamily. Homohexamer; trimer of dimers. It depends on Mg(2+) as a cofactor.

The catalysed reaction is 5-dehydro-4-deoxy-D-glucarate = 2-hydroxy-3-oxopropanoate + pyruvate. It catalyses the reaction 2-dehydro-3-deoxy-D-glucarate = 2-hydroxy-3-oxopropanoate + pyruvate. The protein operates within carbohydrate acid metabolism; galactarate degradation; D-glycerate from galactarate: step 2/3. Its function is as follows. Catalyzes the reversible retro-aldol cleavage of both 5-keto-4-deoxy-D-glucarate and 2-keto-3-deoxy-D-glucarate to pyruvate and tartronic semialdehyde. This Escherichia coli O157:H7 (strain EC4115 / EHEC) protein is 5-keto-4-deoxy-D-glucarate aldolase.